Reading from the N-terminus, the 430-residue chain is Meiotically up-regulated gene 132 protein (430 aa).

Belongs to the UPF0300 family.

The protein resides in the mitochondrion. Its function is as follows. Has a role in meiosis. This Schizosaccharomyces pombe (strain 972 / ATCC 24843) (Fission yeast) protein is Meiotically up-regulated gene 132 protein (mug132).